We begin with the raw amino-acid sequence, 184 residues long: Elongation factor P (184 aa).

Belongs to the elongation factor P family.

It is found in the cytoplasm. The protein operates within protein biosynthesis; polypeptide chain elongation. Functionally, involved in peptide bond synthesis. Stimulates efficient translation and peptide-bond synthesis on native or reconstituted 70S ribosomes in vitro. Probably functions indirectly by altering the affinity of the ribosome for aminoacyl-tRNA, thus increasing their reactivity as acceptors for peptidyl transferase. The sequence is that of Elongation factor P from Variovorax paradoxus (strain S110).